Reading from the N-terminus, the 792-residue chain is Phenylalanine--tRNA ligase beta subunit (792 aa).

The tRNA-binding domain maps to 39–150 (APAFHKVVVA…PDAPVGTDFR (112 aa)). The region spanning 405-480 (PARDPIRLGL…RMYGYNRIAA (76 aa)) is the B5 domain. Mg(2+) is bound by residues D458, D464, E467, and E468. An FDX-ACB domain is found at 698–791 (SKYPPIRRDI…LENRFGARLR (94 aa)).

The protein belongs to the phenylalanyl-tRNA synthetase beta subunit family. Type 1 subfamily. In terms of assembly, tetramer of two alpha and two beta subunits. Mg(2+) serves as cofactor.

It is found in the cytoplasm. The catalysed reaction is tRNA(Phe) + L-phenylalanine + ATP = L-phenylalanyl-tRNA(Phe) + AMP + diphosphate + H(+). This is Phenylalanine--tRNA ligase beta subunit from Nitrosospira multiformis (strain ATCC 25196 / NCIMB 11849 / C 71).